Consider the following 270-residue polypeptide: 4-hydroxy-tetrahydrodipicolinate reductase (270 aa).

NAD(+)-binding positions include glycine 11–methionine 16 and glutamate 37. NADP(+) is bound at residue arginine 38. Residues glycine 101–threonine 103 and alanine 125–methionine 128 contribute to the NAD(+) site. Histidine 158 functions as the Proton donor/acceptor in the catalytic mechanism. Histidine 159 provides a ligand contact to (S)-2,3,4,5-tetrahydrodipicolinate. The Proton donor role is filled by lysine 162. Glycine 168–threonine 169 is a (S)-2,3,4,5-tetrahydrodipicolinate binding site.

This sequence belongs to the DapB family.

It is found in the cytoplasm. It carries out the reaction (S)-2,3,4,5-tetrahydrodipicolinate + NAD(+) + H2O = (2S,4S)-4-hydroxy-2,3,4,5-tetrahydrodipicolinate + NADH + H(+). It catalyses the reaction (S)-2,3,4,5-tetrahydrodipicolinate + NADP(+) + H2O = (2S,4S)-4-hydroxy-2,3,4,5-tetrahydrodipicolinate + NADPH + H(+). It functions in the pathway amino-acid biosynthesis; L-lysine biosynthesis via DAP pathway; (S)-tetrahydrodipicolinate from L-aspartate: step 4/4. Its function is as follows. Catalyzes the conversion of 4-hydroxy-tetrahydrodipicolinate (HTPA) to tetrahydrodipicolinate. The sequence is that of 4-hydroxy-tetrahydrodipicolinate reductase from Shewanella frigidimarina (strain NCIMB 400).